The chain runs to 390 residues: Telobox protein 1 (390 aa).

The interval 30–57 (ENPSKREVAQDVPGFERKPTKVRKPRVK) is disordered. Over residues 32 to 48 (PSKREVAQDVPGFERKP) the composition is skewed to basic and acidic residues. HTH myb-type domains lie at 50–109 (KVRK…PEDY) and 135–193 (STRK…PERY). A DNA-binding region (H-T-H motif) is located at residues 78 to 105 (WKKILLDERFHFTNRSPNDLKDRFRTIL). The tract at residues 115–143 (NAKTHMGRPQKIPHTVGLSKSTRKERKQF) is disordered. The segment at residues 162–189 (WTRISKDANLGLQNRRSTDLRDRFRNAF) is a DNA-binding region (H-T-H motif). Composition is skewed to polar residues over residues 244 to 257 (SNPN…TEQP) and 322 to 340 (ISPS…SIQQ). 2 disordered regions span residues 244-278 (SNPN…FTSQ) and 316-390 (QPPS…DNRG). Residues 347 to 360 (PPLSSNTLNSSTLP) show a composition bias toward low complexity.

It localises to the nucleus. Its function is as follows. General transcription factor with prominent roles in controlling histone levels and stability. Binds and regulates the activities of many promoters, including those controlling the expression of all four types of canonical histones. Is also involved in the centromeric loading of cnp1 and maintenance of centromere identity. Moreover, regulates the expression of cdc2, a protease capable of histone clipping. The sequence is that of Telobox protein 1 from Schizosaccharomyces pombe (strain 972 / ATCC 24843) (Fission yeast).